Consider the following 338-residue polypeptide: Aspartate carbamoyltransferase catalytic subunit (338 aa).

2 residues coordinate carbamoyl phosphate: R71 and T72. L-aspartate is bound at residue K99. Carbamoyl phosphate is bound by residues R121, H151, and Q154. Residues R184 and R239 each contribute to the L-aspartate site. Carbamoyl phosphate contacts are provided by G280 and P281.

Belongs to the aspartate/ornithine carbamoyltransferase superfamily. ATCase family. In terms of assembly, heterododecamer (2C3:3R2) of six catalytic PyrB chains organized as two trimers (C3), and six regulatory PyrI chains organized as three dimers (R2).

The catalysed reaction is carbamoyl phosphate + L-aspartate = N-carbamoyl-L-aspartate + phosphate + H(+). Its pathway is pyrimidine metabolism; UMP biosynthesis via de novo pathway; (S)-dihydroorotate from bicarbonate: step 2/3. Its function is as follows. Catalyzes the condensation of carbamoyl phosphate and aspartate to form carbamoyl aspartate and inorganic phosphate, the committed step in the de novo pyrimidine nucleotide biosynthesis pathway. The chain is Aspartate carbamoyltransferase catalytic subunit from Stutzerimonas stutzeri (strain A1501) (Pseudomonas stutzeri).